Reading from the N-terminus, the 205-residue chain is Mitotic spindle assembly checkpoint protein MAD2A (205 aa).

Ala-2 carries the N-acetylalanine modification. Phosphoserine is present on residues Ser-6, Ser-130, Ser-170, Ser-178, Ser-185, and Ser-195. Residues 14-197 enclose the HORMA domain; it reads RGSAEIVAEF…TTIHKVNSMV (184 aa). Positions 195–205 are required for assuming the closed conformation and for interaction with CDC20; sequence SMVAYKIPVND.

It belongs to the MAD2 family. Monomer and homodimer. Heterodimerizes with MAD2L1 in order to form a tetrameric MAD1L1-MAD2L1 core complex. In the closed and open conformation, interacts with MAD1L1. Formation of a heterotetrameric core complex containing two molecules each of MAD1L1 and of MAD2L1 promotes binding of another molecule of MAD2L1 to each MAD2L1, resulting in a heterohexamer. Interacts with MAD2L1BP. Interacts with ADAM17/TACE. Interacts with CDC20. Dimeric MAD2L1 in the closed conformation interacts with CDC20. Monomeric MAD2L1 in the open conformation does not interact with CDC20. CDC20 competes with MAD1L1 for MAD2L1 binding. In the closed conformation, interacts with BUB1B. Interacts with TTK. Interacts with TPR. Binds to UBD (via ubiquitin-like 1 domain) during mitosis. Interacts with isoform 1 and isoform 2 of NEK2. Interacts with HSF1; this interaction occurs in mitosis. Interacts with isoform 3 of MAD1L1; this interaction leads to the cytoplasmic sequestration of MAD2L1. In terms of processing, phosphorylated on multiple serine residues. The level of phosphorylation varies during the cell cycle and is highest during mitosis. Phosphorylation abolishes interaction with MAD1L1 and reduces interaction with CDC20. Phosphorylated by NEK2.

The protein resides in the nucleus. The protein localises to the chromosome. It is found in the centromere. Its subcellular location is the kinetochore. It localises to the cytoplasm. The protein resides in the cytoskeleton. The protein localises to the spindle pole. Its function is as follows. Component of the spindle-assembly checkpoint that prevents the onset of anaphase until all chromosomes are properly aligned at the metaphase plate. In the closed conformation (C-MAD2) forms a heterotetrameric complex with MAD1L1 at unattached kinetochores during prometaphase, the complex recruits open conformation molecules of MAD2L1 (O-MAD2) and then promotes the conversion of O-MAD2 to C-MAD2. Required for the execution of the mitotic checkpoint which monitors the process of kinetochore-spindle attachment and inhibits the activity of the anaphase promoting complex by sequestering CDC20 until all chromosomes are aligned at the metaphase plate. This Homo sapiens (Human) protein is Mitotic spindle assembly checkpoint protein MAD2A (MAD2L1).